A 66-amino-acid chain; its full sequence is Beta-toxin ChFII.7 (66 aa).

The 66-residue stretch at 1 to 66 folds into the LCN-type CS-alpha/beta domain; the sequence is KEGYLVNHST…VWPLPKKTCN (66 aa). 4 cysteine pairs are disulfide-bonded: Cys-12–Cys-65, Cys-16–Cys-41, Cys-25–Cys-46, and Cys-29–Cys-48. Asn-66 bears the Asparagine amide mark.

As to expression, expressed by the venom gland.

Its subcellular location is the secreted. In terms of biological role, beta toxins bind voltage independently at site-4 of sodium channels (Nav) and shift the activation voltage toward more negative potentials, thereby affecting sodium channel activation CC and promoting spontaneous and repetitive firing. This is Beta-toxin ChFII.7 from Centruroides hirsutipalpus (Scorpion).